Consider the following 153-residue polypeptide: 6,7-dimethyl-8-ribityllumazine synthase (153 aa).

Residues Phe-21, 55–57 (AFE), and 79–81 (TVI) contribute to the 5-amino-6-(D-ribitylamino)uracil site. 84–85 (AT) contributes to the (2S)-2-hydroxy-3-oxobutyl phosphate binding site. His-87 serves as the catalytic Proton donor. Position 112 (Phe-112) interacts with 5-amino-6-(D-ribitylamino)uracil. Position 126 (Arg-126) interacts with (2S)-2-hydroxy-3-oxobutyl phosphate.

The protein belongs to the DMRL synthase family. In terms of assembly, forms an icosahedral capsid composed of 60 subunits, arranged as a dodecamer of pentamers.

It carries out the reaction (2S)-2-hydroxy-3-oxobutyl phosphate + 5-amino-6-(D-ribitylamino)uracil = 6,7-dimethyl-8-(1-D-ribityl)lumazine + phosphate + 2 H2O + H(+). The protein operates within cofactor biosynthesis; riboflavin biosynthesis; riboflavin from 2-hydroxy-3-oxobutyl phosphate and 5-amino-6-(D-ribitylamino)uracil: step 1/2. Catalyzes the formation of 6,7-dimethyl-8-ribityllumazine by condensation of 5-amino-6-(D-ribitylamino)uracil with 3,4-dihydroxy-2-butanone 4-phosphate. This is the penultimate step in the biosynthesis of riboflavin. The chain is 6,7-dimethyl-8-ribityllumazine synthase from Bacillus cereus (strain G9842).